Consider the following 305-residue polypeptide: Ornithine carbamoyltransferase (305 aa).

Residues 53–56 (STRT), Q80, R104, and 131–134 (HPCQ) contribute to the carbamoyl phosphate site. L-ornithine contacts are provided by residues N162, D219, and 223–224 (SM). Carbamoyl phosphate is bound by residues 259 to 260 (CL) and R287.

It belongs to the aspartate/ornithine carbamoyltransferase superfamily. OTCase family.

It is found in the cytoplasm. The enzyme catalyses carbamoyl phosphate + L-ornithine = L-citrulline + phosphate + H(+). It participates in amino-acid biosynthesis; L-arginine biosynthesis; L-arginine from L-ornithine and carbamoyl phosphate: step 1/3. In terms of biological role, reversibly catalyzes the transfer of the carbamoyl group from carbamoyl phosphate (CP) to the N(epsilon) atom of ornithine (ORN) to produce L-citrulline. This chain is Ornithine carbamoyltransferase, found in Psychrobacter cryohalolentis (strain ATCC BAA-1226 / DSM 17306 / VKM B-2378 / K5).